Consider the following 1369-residue polypeptide: DNA-directed RNA polymerase subunit beta' (1369 aa).

A disordered region spans residues 1 to 26 (MTSSSPKTRKSSTKSKAKRGSKSKKA). The span at 7–24 (KTRKSSTKSKAKRGSKSK) shows a compositional bias: basic residues. The Zn(2+) site is built by Cys253, Cys320, Cys327, and Cys330. The disordered stretch occupies residues 1294–1369 (TVDMPSSPVA…LQEEGLLSDE (76 aa)). Acidic residues predominate over residues 1342–1351 (DDELSAEDQM). Over residues 1357 to 1369 (LEGLQEEGLLSDE) the composition is skewed to low complexity.

Belongs to the RNA polymerase beta' chain family. RpoC2 subfamily. As to quaternary structure, in cyanobacteria the RNAP catalytic core is composed of 2 alpha, 1 beta, 1 beta', 1 gamma and 1 omega subunit. When a sigma factor is associated with the core the holoenzyme is formed, which can initiate transcription. Zn(2+) is required as a cofactor.

It carries out the reaction RNA(n) + a ribonucleoside 5'-triphosphate = RNA(n+1) + diphosphate. In terms of biological role, DNA-dependent RNA polymerase catalyzes the transcription of DNA into RNA using the four ribonucleoside triphosphates as substrates. The protein is DNA-directed RNA polymerase subunit beta' of Prochlorococcus marinus (strain NATL2A).